The following is a 261-amino-acid chain: Global transcriptional regulator CodY (261 aa).

A GAF domain region spans residues 1–159; the sequence is MANLLSKTRR…SSTVVGIQLL (159 aa). The H-T-H motif DNA-binding region spans 207–226; sequence ASVIADRIGITRSVIVNALR.

The protein belongs to the CodY family.

It is found in the cytoplasm. Its function is as follows. DNA-binding global transcriptional regulator which is involved in the adaptive response to starvation and acts by directly or indirectly controlling the expression of numerous genes in response to nutrient availability. During rapid exponential growth, CodY is highly active and represses genes whose products allow adaptation to nutrient depletion. This Streptococcus mutans serotype c (strain ATCC 700610 / UA159) protein is Global transcriptional regulator CodY.